We begin with the raw amino-acid sequence, 508 residues long: Galactose-1-phosphate uridylyltransferase (508 aa).

It belongs to the galactose-1-phosphate uridylyltransferase type 2 family.

Its subcellular location is the cytoplasm. The enzyme catalyses alpha-D-galactose 1-phosphate + UDP-alpha-D-glucose = alpha-D-glucose 1-phosphate + UDP-alpha-D-galactose. It participates in carbohydrate metabolism; galactose metabolism. The protein is Galactose-1-phosphate uridylyltransferase (galT) of Halalkalibacterium halodurans (strain ATCC BAA-125 / DSM 18197 / FERM 7344 / JCM 9153 / C-125) (Bacillus halodurans).